The sequence spans 216 residues: MRLSALLALASKVTLPPNYRYGMSRPGSLADKKKNPPGTRRRRVAVEPIPEEDWHLFCGDRVEILEGKDAGKQGKVVQVIRQRNWVVVEGLNTHYRYVGKTVDFRGTMVPSEAPLLHNQVKLVDPMDRKPTEVEWRFTEAGERVRVSTRSGRIIPKPDVPRADGIVPETWIDGPKDTSVEDALEKTYVPRLKTLEEEVMEAMGIQETRRHKKVYWY.

Residues 1 to 9 (MRLSALLAL) constitute a mitochondrion transit peptide. The residue at position 24 (Ser24) is a Phosphoserine. The 34-residue stretch at 56–89 (LFCGDRVEILEGKDAGKQGKVVQVIRQRNWVVVE) folds into the KOW domain.

The protein belongs to the universal ribosomal protein uL24 family. Component of the mitochondrial ribosome large subunit (39S) which comprises a 16S rRNA and about 50 distinct proteins.

The protein localises to the mitochondrion. This chain is Large ribosomal subunit protein uL24m (MRPL24), found in Bos taurus (Bovine).